The sequence spans 109 residues: Large ribosomal subunit protein uL24 (109 aa).

This sequence belongs to the universal ribosomal protein uL24 family. As to quaternary structure, part of the 50S ribosomal subunit.

In terms of biological role, one of two assembly initiator proteins, it binds directly to the 5'-end of the 23S rRNA, where it nucleates assembly of the 50S subunit. Its function is as follows. One of the proteins that surrounds the polypeptide exit tunnel on the outside of the subunit. The chain is Large ribosomal subunit protein uL24 from Ehrlichia canis (strain Jake).